We begin with the raw amino-acid sequence, 217 residues long: Thymidylate kinase (217 aa).

16-23 (GIDGAGKT) contacts ATP.

This sequence belongs to the thymidylate kinase family.

The enzyme catalyses dTMP + ATP = dTDP + ADP. Functionally, phosphorylation of dTMP to form dTDP in both de novo and salvage pathways of dTTP synthesis. In Xylella fastidiosa (strain M23), this protein is Thymidylate kinase.